The sequence spans 379 residues: Galactose-1-phosphate uridylyltransferase (379 aa).

A disordered region spans residues 1 to 21 (MSRSGTDPQQRQQASEADAAA). Residues 9 to 21 (QQRQQASEADAAA) show a composition bias toward low complexity. Residue Cys75 coordinates Zn(2+). UDP-alpha-D-glucose contacts are provided by residues Ala81, 97-98 (ND), and Asn173. His184 contacts Zn(2+). The active-site Tele-UMP-histidine intermediate is the His186. Gln188 lines the UDP-alpha-D-glucose pocket. Glu202, His301, His319, and His321 together coordinate Zn(2+). Residues 334–337 (KFMV) and 339–340 (YE) each bind UDP-alpha-D-glucose.

It belongs to the galactose-1-phosphate uridylyltransferase type 1 family. In terms of assembly, homodimer. It depends on Zn(2+) as a cofactor.

The enzyme catalyses alpha-D-galactose 1-phosphate + UDP-alpha-D-glucose = alpha-D-glucose 1-phosphate + UDP-alpha-D-galactose. Its pathway is carbohydrate metabolism; galactose metabolism. Its function is as follows. Plays an important role in galactose metabolism. This chain is Galactose-1-phosphate uridylyltransferase (GALT), found in Homo sapiens (Human).